Consider the following 928-residue polypeptide: Periplasmic nitrate reductase (928 aa).

The segment at residues 1–33 (MAFSRREFLKSAAAASAASAVGMSVPSQLLAQA) is a signal peptide (tat-type signal). The 57-residue stretch at 40–96 (WRWDKSVCRFCGTGCGIMVATKNDQIVAVKGDPAAPVNRGLNCIKGYFNAKIMYGAD) folds into the 4Fe-4S Mo/W bis-MGD-type domain. Residues cysteine 47, cysteine 50, cysteine 54, and cysteine 82 each contribute to the [4Fe-4S] cluster site. Residues lysine 84, glutamine 152, asparagine 177, cysteine 181, 214-221 (WGANMAEM), 265-267 (QTD), methionine 422, glutamine 426, asparagine 532, 557-558 (SD), lysine 580, aspartate 607, and 818-827 (TGRVLEHWHS) contribute to the Mo-bis(molybdopterin guanine dinucleotide) site. Position 894 (tryptophan 894) interacts with substrate. The Mo-bis(molybdopterin guanine dinucleotide) site is built by asparagine 902 and lysine 919.

This sequence belongs to the prokaryotic molybdopterin-containing oxidoreductase family. NasA/NapA/NarB subfamily. As to quaternary structure, component of the periplasmic nitrate reductase NapAB complex composed of NapA and NapB. [4Fe-4S] cluster serves as cofactor. It depends on Mo-bis(molybdopterin guanine dinucleotide) as a cofactor. Predicted to be exported by the Tat system. The position of the signal peptide cleavage has not been experimentally proven.

The protein resides in the periplasm. The catalysed reaction is 2 Fe(II)-[cytochrome] + nitrate + 2 H(+) = 2 Fe(III)-[cytochrome] + nitrite + H2O. In terms of biological role, catalytic subunit of the periplasmic nitrate reductase complex NapAB. Receives electrons from NapB and catalyzes the reduction of nitrate to nitrite. This Wolinella succinogenes (strain ATCC 29543 / DSM 1740 / CCUG 13145 / JCM 31913 / LMG 7466 / NCTC 11488 / FDC 602W) (Vibrio succinogenes) protein is Periplasmic nitrate reductase.